The primary structure comprises 109 residues: Small ribosomal subunit protein uS17 (109 aa).

It belongs to the universal ribosomal protein uS17 family. As to quaternary structure, part of the 30S ribosomal subunit.

One of the primary rRNA binding proteins, it binds specifically to the 5'-end of 16S ribosomal RNA. The protein is Small ribosomal subunit protein uS17 of Methanococcus maripaludis (strain DSM 14266 / JCM 13030 / NBRC 101832 / S2 / LL).